The following is a 145-amino-acid chain: Ribonuclease H (145 aa).

The RNase H type-1 domain occupies 1-141 (MQEVELFTDG…VDELANQAMD (141 aa)). Residues Asp-9, Glu-47, Asp-69, and Asp-133 each coordinate Mg(2+).

Belongs to the RNase H family. In terms of assembly, monomer. Mg(2+) is required as a cofactor.

Its subcellular location is the cytoplasm. The catalysed reaction is Endonucleolytic cleavage to 5'-phosphomonoester.. In terms of biological role, endonuclease that specifically degrades the RNA of RNA-DNA hybrids. In Hydrogenovibrio crunogenus (strain DSM 25203 / XCL-2) (Thiomicrospira crunogena), this protein is Ribonuclease H.